We begin with the raw amino-acid sequence, 682 residues long: uncharacterized protein (682 aa).

Residues 284–487 enclose the MCM domain; sequence VVNILADRLI…KDKDIAEYIV (204 aa). Residue 329–336 participates in ATP binding; that stretch reads TDPGIGKT.

Belongs to the MCM family.

This is an uncharacterized protein from Methanocaldococcus jannaschii (strain ATCC 43067 / DSM 2661 / JAL-1 / JCM 10045 / NBRC 100440) (Methanococcus jannaschii).